The chain runs to 267 residues: Low affinity immunoglobulin gamma Fc region receptor III (267 aa).

A signal peptide spans 1-36 (MTLETQMFQNAHSGSQWLLPPLTMLLLFAFADRQTA). At 37-221 (NLPKAVVKRD…STSSLVWFHA (185 aa)) the chain is on the extracellular side. Ig-like C2-type domains follow at residues 39 to 121 (PKAV…EVIS) and 122 to 204 (DWLL…VTIT). 2 cysteine pairs are disulfide-bonded: Cys62–Cys104 and Cys143–Cys187. 5 N-linked (GlcNAc...) asparagine glycosylation sites follow: Asn70, Asn78, Asn97, Asn171, and Asn178. A helical membrane pass occupies residues 222–241 (AFCLVMCLLFAVDTGLYFCV). At 242–267 (RRNLQTSGEDWRKSLSVGKYKAPQDK) the chain is on the cytoplasmic side.

May form multisubunit complex with other heteroproteins. This association is required for efficient cell-surface expression. Does not associate with CD3 zeta. As to expression, expressed on natural killer cells and macrophages.

It localises to the cell membrane. Functionally, receptor for the Fc region of complexed immunoglobulins gamma. Low affinity receptor which binds to IgG1, IgG2a and IgG2b. Mediates neutrophil activation by IgG complexes redundantly with Fcgr4. The polypeptide is Low affinity immunoglobulin gamma Fc region receptor III (Fcgr3) (Rattus norvegicus (Rat)).